A 953-amino-acid chain; its full sequence is Glycine dehydrogenase (decarboxylating) (953 aa).

At Lys705 the chain carries N6-(pyridoxal phosphate)lysine.

This sequence belongs to the GcvP family. As to quaternary structure, the glycine cleavage system is composed of four proteins: P, T, L and H. Pyridoxal 5'-phosphate serves as cofactor.

The enzyme catalyses N(6)-[(R)-lipoyl]-L-lysyl-[glycine-cleavage complex H protein] + glycine + H(+) = N(6)-[(R)-S(8)-aminomethyldihydrolipoyl]-L-lysyl-[glycine-cleavage complex H protein] + CO2. Its function is as follows. The glycine cleavage system catalyzes the degradation of glycine. The P protein binds the alpha-amino group of glycine through its pyridoxal phosphate cofactor; CO(2) is released and the remaining methylamine moiety is then transferred to the lipoamide cofactor of the H protein. This is Glycine dehydrogenase (decarboxylating) from Sodalis glossinidius (strain morsitans).